A 92-amino-acid polypeptide reads, in one-letter code: MTRSLKKNPFVANHLLGRIEKLNRREEKEIIVTWSRASTIIPTMIGHTIAIHNGKEHLPIYITDRMVGHKLGEFAPTLTFVRHARNDKKSRR.

It belongs to the universal ribosomal protein uS19 family.

The protein resides in the plastid. It localises to the chloroplast. Functionally, protein S19 forms a complex with S13 that binds strongly to the 16S ribosomal RNA. The polypeptide is Small ribosomal subunit protein uS19c (Phalaenopsis aphrodite subsp. formosana (Moth orchid)).